Reading from the N-terminus, the 449-residue chain is Zinc finger and BTB domain-containing protein 14 (449 aa).

In terms of domain architecture, BTB spans 36–102 (CDIAIVVEDV…MYTAKISVKK (67 aa)). A Glycyl lysine isopeptide (Lys-Gly) (interchain with G-Cter in SUMO2) cross-link involves residue Lys46. The short motif at 50 to 66 (HRCVLAACSTYFKKLFK) is the Nuclear localization signal element. The tract at residues 153 to 194 (GDAADTQDDDVEEIGDQDDSPSDDTVEGTPPSQEDGKSPTTT) is disordered. Positions 157 to 178 (DTQDDDVEEIGDQDDSPSDDTV) are enriched in acidic residues. Residues Lys203 and Lys249 each participate in a glycyl lysine isopeptide (Lys-Gly) (interchain with G-Cter in SUMO2) cross-link. C2H2-type zinc fingers lie at residues 277–304 (IACQ…ADRP), 305–332 (FVCE…GYKP), 333–360 (YSCE…NERP), 361–388 (FACH…GEKP), and 389–417 (FVCG…ERKQ).

This sequence belongs to the krueppel C2H2-type zinc-finger protein family. As to quaternary structure, interacts with ZBTB21.

It is found in the nucleus. Functionally, transcriptional activator of the dopamine transporter (DAT), binding it's promoter at the consensus sequence 5'-CCTGCACAGTTCACGGA-3'. Binds to 5'-d(GCC)(n)-3' trinucleotide repeats in promoter regions and acts as a repressor of the FMR1 gene. Transcriptional repressor of MYC and thymidine kinase promoters. This is Zinc finger and BTB domain-containing protein 14 (ZBTB14) from Homo sapiens (Human).